Consider the following 148-residue polypeptide: Lysozyme C (148 aa).

Positions 1–18 (MKALLLLGLLLLSVTVQG) are cleaved as a signal peptide. Residues 19–148 (KIFERCDLAR…VSQYVRNCGV (130 aa)) enclose the C-type lysozyme domain. Intrachain disulfides connect Cys24–Cys146, Cys48–Cys134, Cys83–Cys99, and Cys95–Cys113. Residues Glu53 and Asp71 contribute to the active site.

It belongs to the glycosyl hydrolase 22 family. In terms of assembly, monomer.

The enzyme catalyses Hydrolysis of (1-&gt;4)-beta-linkages between N-acetylmuramic acid and N-acetyl-D-glucosamine residues in a peptidoglycan and between N-acetyl-D-glucosamine residues in chitodextrins.. Its function is as follows. Lysozymes have primarily a bacteriolytic function; those in tissues and body fluids are associated with the monocyte-macrophage system and enhance the activity of immunoagents. This chain is Lysozyme C (LYZ), found in Halichoerus grypus (Gray seal).